The following is a 785-amino-acid chain: Cation/H(+) antiporter 1 (785 aa).

12 helical membrane passes run 19–39 (LNTM…FYLF), 44–64 (GQAG…LTII), 79–99 (YYIF…GLEI), 112–132 (IVIT…FLWF), 143–163 (FLTF…PVVI), 179–199 (LAIS…TIVL), 201–221 (FISG…GVII), 240–260 (YLSK…ALTI), 294–314 (YPIH…RFSV), 323–343 (LVLG…VLFA), 352–372 (QYWL…LVLL), and 389–409 (MFVA…SLLL).

It belongs to the monovalent cation:proton antiporter 2 (CPA2) transporter (TC 2.A.37) family. CHX (TC 2.A.37.4) subfamily. In terms of tissue distribution, specifically expressed in pollen.

The protein resides in the membrane. Its function is as follows. May operate as a cation/H(+) antiporter. This Arabidopsis thaliana (Mouse-ear cress) protein is Cation/H(+) antiporter 1 (CHX1).